Here is a 568-residue protein sequence, read N- to C-terminus: Polyprotein P2A (568 aa).

The next 2 helical transmembrane spans lie at 10–30 (KSVMLMSRMSWSKLALLISVA) and 41–61 (TLICMGILVSVVLNWIVCAVC). The Peptidase S39 domain occupies 129–326 (VENSRLQPLE…TVENSELYPD (198 aa)). Catalysis depends on for protease activity residues His176, Asp209, and Ser276. Thr339 is modified (phosphothreonine; by host). Ser390 carries the post-translational modification Phosphoserine; by host. Disordered regions lie at residues 403–435 (LNYQRAGSLRGSPPLANLSSTRATSGVTKESSI) and 469–568 (SSQN…ATSK). 2 stretches are compositionally biased toward polar residues: residues 419–435 (NLSSTRATSGVTKESSI) and 469–478 (SSQNSKSSLG). A compositionally biased stretch (basic and acidic residues) spans 481–502 (ADRKQKSDRSSSKPEGLKESKR). The span at 507–516 (NWQSLTSKPS) shows a compositional bias: polar residues. A compositionally biased stretch (basic residues) spans 539-549 (KSKRSRTRGKS). Residues 554 to 568 (VPASPSPKSGSATSK) show a composition bias toward polar residues.

It is found in the host membrane. Its function is as follows. Responsible for cleavages of polyprotein P2A and replicase polyprotein P2AB. In terms of biological role, covalently attached to the 5' extremity of the genomic and subgenomic RNAs. It may serve as a primer for the replicase. This chain is Polyprotein P2A, found in Cocksfoot mottle virus (isolate Dactylis glomerata/Norway/CfMV-NO/1995) (CfMV).